The sequence spans 629 residues: D-proline reductase proprotein PrdA (629 aa).

Cys425 serves as the catalytic Covalent intermediate with substrate; via pyruvic acid. At Cys425 the chain carries Pyruvic acid (Cys).

As to quaternary structure, consists of 3 subunits of 23, 26 and 45 kDa (alpha, gamma and beta respectively). The molecular weight of the complex is approximately 870 kDa, suggesting a decameric structure, if all 3 subunits are present in equal stoichiometry. In terms of processing, the peptide chain is cleaved into beta and alpha chains, and the alpha chain N-terminal cysteine is deaminated and oxidized to form a reactive pyruvoyl group.

It localises to the cytoplasm. It carries out the reaction [PrdC protein]-Se-L-selenocysteinyl-S-L-cysteine + 5-aminopentanoate = [PrdC protein]-L-selenocysteine/L-cysteine + D-proline. Its function is as follows. D-proline reductase catalyzes the reductive cleavage of a C-N bond in D-proline resulting in the formation of 5-aminovalerate. The alpha subunit has been shown to bind D-proline, presumably via the pyruvoyl group. This chain is D-proline reductase proprotein PrdA (prdA), found in Acetoanaerobium sticklandii (strain ATCC 12662 / DSM 519 / JCM 1433 / CCUG 9281 / NCIMB 10654 / HF) (Clostridium sticklandii).